The primary structure comprises 98 residues: MVRIRLTRMGKRHMPFYRIVVVDSRKRRDGAYIESLGYYNPLRKPAEIKVNVERAVEWILKGAQPSETAANILSKAGVLAKVHEMKYGKREKSDEGVS.

It belongs to the bacterial ribosomal protein bS16 family.

The chain is Small ribosomal subunit protein bS16 from Pseudothermotoga lettingae (strain ATCC BAA-301 / DSM 14385 / NBRC 107922 / TMO) (Thermotoga lettingae).